A 172-amino-acid chain; its full sequence is UBA-like domain-containing protein 2 (172 aa).

Residues 118–130 (PPNQQPVWLPPSS) are compositionally biased toward pro residues. Positions 118–172 (PPNQQPVWLPPSSPTGHHTLHHHHHHMHPPPSWPPVSQPANGPQTPVISALHGQR) are disordered. Basic residues predominate over residues 135–145 (HTLHHHHHHMH).

This sequence belongs to the UBALD family.

In Danio rerio (Zebrafish), this protein is UBA-like domain-containing protein 2 (ubald2).